Reading from the N-terminus, the 344-residue chain is Dihydroorotase (344 aa).

Zn(2+) contacts are provided by H13 and H15. Residues 15 to 17 (HLR) and N41 each bind substrate. Zn(2+) contacts are provided by K98, H135, and H173. Position 98 is an N6-carboxylysine (K98). A substrate-binding site is contributed by H135. L218 is a binding site for substrate. D247 provides a ligand contact to Zn(2+). The active site involves D247. Positions 251 and 263 each coordinate substrate.

It belongs to the metallo-dependent hydrolases superfamily. DHOase family. Class II DHOase subfamily. As to quaternary structure, homodimer. Zn(2+) serves as cofactor.

It catalyses the reaction (S)-dihydroorotate + H2O = N-carbamoyl-L-aspartate + H(+). Its pathway is pyrimidine metabolism; UMP biosynthesis via de novo pathway; (S)-dihydroorotate from bicarbonate: step 3/3. Functionally, catalyzes the reversible cyclization of carbamoyl aspartate to dihydroorotate. The protein is Dihydroorotase of Neisseria gonorrhoeae (strain ATCC 700825 / FA 1090).